The following is a 517-amino-acid chain: ATP synthase subunit beta (517 aa).

Position 167–174 (167–174 (GGAGVGKT)) interacts with ATP. Composition is skewed to basic and acidic residues over residues 475–484 (AESMGAKMDD) and 495–508 (DSKD…KADD). Positions 475–517 (AESMGAKMDDGGSDGAPPPSDSKDKGKGDSKADDKGDDADKDA) are disordered.

It belongs to the ATPase alpha/beta chains family. As to quaternary structure, F-type ATPases have 2 components, CF(1) - the catalytic core - and CF(0) - the membrane proton channel. CF(1) has five subunits: alpha(3), beta(3), gamma(1), delta(1), epsilon(1). CF(0) has three main subunits: a(1), b(2) and c(9-12). The alpha and beta chains form an alternating ring which encloses part of the gamma chain. CF(1) is attached to CF(0) by a central stalk formed by the gamma and epsilon chains, while a peripheral stalk is formed by the delta and b chains.

The protein resides in the cell membrane. It catalyses the reaction ATP + H2O + 4 H(+)(in) = ADP + phosphate + 5 H(+)(out). Its function is as follows. Produces ATP from ADP in the presence of a proton gradient across the membrane. The catalytic sites are hosted primarily by the beta subunits. In Mycobacterium sp. (strain JLS), this protein is ATP synthase subunit beta.